A 201-amino-acid chain; its full sequence is Transmembrane 4 L6 family member 18 (201 aa).

Over Met-1–Cys-9 the chain is Cytoplasmic. A helical membrane pass occupies residues Leu-10–Phe-30. Topologically, residues Pro-31–Tyr-49 are extracellular. Residues Phe-50–Leu-70 form a helical membrane-spanning segment. The Cytoplasmic segment spans residues Glu-71–Ser-93. Residues Ile-94–Gly-114 form a helical membrane-spanning segment. At Leu-115–Trp-157 the chain is on the extracellular side. A helical transmembrane segment spans residues Asn-158–Ile-178. The Cytoplasmic portion of the chain corresponds to Arg-179 to Ile-201.

This sequence belongs to the L6 tetraspanin family.

It localises to the membrane. The protein is Transmembrane 4 L6 family member 18 (TM4SF18) of Homo sapiens (Human).